The primary structure comprises 466 residues: Asparagine--tRNA ligase (466 aa).

This sequence belongs to the class-II aminoacyl-tRNA synthetase family. As to quaternary structure, homodimer.

Its subcellular location is the cytoplasm. The enzyme catalyses tRNA(Asn) + L-asparagine + ATP = L-asparaginyl-tRNA(Asn) + AMP + diphosphate + H(+). This Klebsiella pneumoniae subsp. pneumoniae (strain ATCC 700721 / MGH 78578) protein is Asparagine--tRNA ligase.